The sequence spans 111 residues: Large ribosomal subunit protein uL22 (111 aa).

The protein belongs to the universal ribosomal protein uL22 family. Part of the 50S ribosomal subunit.

Functionally, this protein binds specifically to 23S rRNA; its binding is stimulated by other ribosomal proteins, e.g. L4, L17, and L20. It is important during the early stages of 50S assembly. It makes multiple contacts with different domains of the 23S rRNA in the assembled 50S subunit and ribosome. The globular domain of the protein is located near the polypeptide exit tunnel on the outside of the subunit, while an extended beta-hairpin is found that lines the wall of the exit tunnel in the center of the 70S ribosome. The chain is Large ribosomal subunit protein uL22 from Thermoanaerobacter pseudethanolicus (strain ATCC 33223 / 39E) (Clostridium thermohydrosulfuricum).